We begin with the raw amino-acid sequence, 114 residues long: Large ribosomal subunit protein bL19 (114 aa).

Belongs to the bacterial ribosomal protein bL19 family.

Its function is as follows. This protein is located at the 30S-50S ribosomal subunit interface and may play a role in the structure and function of the aminoacyl-tRNA binding site. The polypeptide is Large ribosomal subunit protein bL19 (Thermoanaerobacter sp. (strain X514)).